A 529-amino-acid chain; its full sequence is Type I restriction enzyme StySPI methylase subunit (529 aa).

S-adenosyl-L-methionine is bound by residues 148 to 153 (QYFTPR), 178 to 180 (TAG), and Glu-216. Residues 424–443 (AEESEVADSEENKNADQHQA) are disordered.

The protein belongs to the N(4)/N(6)-methyltransferase family. In terms of assembly, the type I restriction/modification system is composed of three polypeptides R, M and S; the restriction enzyme has stoichiometry R(2)M(2)S(1) while the methyltransferase is M(2)S(1).

It catalyses the reaction a 2'-deoxyadenosine in DNA + S-adenosyl-L-methionine = an N(6)-methyl-2'-deoxyadenosine in DNA + S-adenosyl-L-homocysteine + H(+). In terms of biological role, the subtype gamma methyltransferase (M) subunit of a type I restriction enzyme. The M and S subunits together form a methyltransferase (MTase) that methylates A-2 on the top strand and A-3 on the bottom strand of the sequence 5'-AACN(6)GTRC-3'. In the presence of the R subunit the complex can also act as an endonuclease, binding to the same target sequence but cutting the DNA some distance from this site. Whether the DNA is cut or modified depends on the methylation state of the target sequence. When the target site is unmodified, the DNA is cut. When the target site is hemimethylated, the complex acts as a maintenance MTase modifying the DNA so that both strands become methylated. After locating a non-methylated recognition site, the enzyme complex serves as a molecular motor that translocates DNA in an ATP-dependent manner until a collision occurs that triggers cleavage. The polypeptide is Type I restriction enzyme StySPI methylase subunit (Salmonella potsdam).